Reading from the N-terminus, the 368-residue chain is Cytochrome b (368 aa).

Transmembrane regions (helical) follow at residues phenylalanine 32 to phenylalanine 52, tryptophan 76 to threonine 98, alanine 112 to valine 132, and phenylalanine 174 to phenylalanine 194. Heme b-binding residues include histidine 82 and histidine 96. Residues histidine 178 and histidine 192 each coordinate heme b. Histidine 197 provides a ligand contact to a ubiquinone. The next 4 helical transmembrane spans lie at methionine 219–alanine 239, glycine 285–leucine 305, glycine 323–proline 343, and tyrosine 347–leucine 367.

It belongs to the cytochrome b family. As to quaternary structure, the main subunits of complex b-c1 are: cytochrome b, cytochrome c1 and the Rieske protein. Requires heme b as cofactor.

It localises to the mitochondrion inner membrane. Its function is as follows. Component of the ubiquinol-cytochrome c reductase complex (complex III or cytochrome b-c1 complex) that is part of the mitochondrial respiratory chain. The b-c1 complex mediates electron transfer from ubiquinol to cytochrome c. Contributes to the generation of a proton gradient across the mitochondrial membrane that is then used for ATP synthesis. This chain is Cytochrome b (MT-CYB), found in Toxoplasma gondii.